The primary structure comprises 103 residues: Urease subunit beta (103 aa).

The protein belongs to the urease beta subunit family. In terms of assembly, heterotrimer of UreA (gamma), UreB (beta) and UreC (alpha) subunits. Three heterotrimers associate to form the active enzyme.

Its subcellular location is the cytoplasm. The enzyme catalyses urea + 2 H2O + H(+) = hydrogencarbonate + 2 NH4(+). Its pathway is nitrogen metabolism; urea degradation; CO(2) and NH(3) from urea (urease route): step 1/1. This chain is Urease subunit beta, found in Streptomyces avermitilis (strain ATCC 31267 / DSM 46492 / JCM 5070 / NBRC 14893 / NCIMB 12804 / NRRL 8165 / MA-4680).